The chain runs to 148 residues: MRLPVLPVHMKYPLFDVSVGQPTVTGEVTQSLRHDRPQFRRHHHAEHASQADGLGHGAAARNSFHHDGGRHGHATRIHENNRRPHKRNRRRHLRKGHLKAHRAESHLYGYLLRNQKACGEKLKICLPASKHPRFQVVLHPRCNKKQPT.

Residues 38-99 (QFRRHHHAEH…RRHLRKGHLK (62 aa)) form a disordered region. Over residues 64 to 82 (FHHDGGRHGHATRIHENNR) the composition is skewed to basic and acidic residues. Basic residues predominate over residues 83–99 (RPHKRNRRRHLRKGHLK).

This is an uncharacterized protein from Fowl adenovirus A serotype 1 (strain CELO / Phelps) (FAdV-1).